Here is a 357-residue protein sequence, read N- to C-terminus: Peptide chain release factor 1 (357 aa).

Position 233 is an N5-methylglutamine (glutamine 233).

Belongs to the prokaryotic/mitochondrial release factor family. Post-translationally, methylated by PrmC. Methylation increases the termination efficiency of RF1.

It is found in the cytoplasm. Peptide chain release factor 1 directs the termination of translation in response to the peptide chain termination codons UAG and UAA. The polypeptide is Peptide chain release factor 1 (Enterococcus faecalis (strain ATCC 700802 / V583)).